The primary structure comprises 196 residues: Alpha-crystallin A chain (196 aa).

An N-acetylmethionine modification is found at Met1. Residues 1–63 form a required for complex formation with BFSP1 and BFSP2 region; that stretch reads MDVTIQHPWF…RTVLDSGISE (63 aa). Position 6 is a deamidated glutamine; partial (Gln6). The residue at position 45 (Ser45) is a Phosphoserine. Deamidated glutamine; partial is present on Gln50. The 110-residue stretch at 76–185 folds into the sHSP domain; it reads HAGNPKNNPV…GHSERAIPVS (110 aa). N6-acetyllysine is present on residues Lys93 and Lys122. His123 lines the Zn(2+) pocket. Asn124 is modified (deamidated asparagine; partial). Zn(2+)-binding residues include Glu125 and His130. At Ser145 the chain carries Phosphoserine. Asn146 bears the Deamidated asparagine; partial mark. The interval 168-196 is disordered; sequence KVQSGLDAGHSERAIPVSREEKPSSAPSS. A Deamidated glutamine; partial modification is found at Gln170. Over residues 176-190 the composition is skewed to basic and acidic residues; that stretch reads GHSERAIPVSREEKP. His177 is a Zn(2+) binding site. Ser185 carries O-linked (GlcNAc) serine glycosylation.

Belongs to the small heat shock protein (HSP20) family. Heteropolymer composed of three CRYAA and one CRYAB subunits. Inter-subunit bridging via zinc ions enhances stability, which is crucial as there is no protein turn over in the lens. Can also form homodimers and homotetramers (dimers of dimers) which serve as the building blocks of homooligomers. Within homooligomers, the zinc-binding motif is created from residues of 3 different molecules. His-123 and Glu-125 from one molecule are ligands of the zinc ion, and His-130 and His-177 residues from additional molecules complete the site with tetrahedral coordination geometry. Part of a complex required for lens intermediate filament formation composed of BFSP1, BFSP2 and CRYAA. In terms of processing, acetylation at Lys-93 may increase chaperone activity. Undergoes age-dependent proteolytical cleavage at the C-terminus.

It localises to the cytoplasm. The protein localises to the nucleus. Functionally, contributes to the transparency and refractive index of the lens. Acts as a chaperone, preventing aggregation of various proteins under a wide range of stress conditions. Required for the correct formation of lens intermediate filaments as part of a complex composed of BFSP1, BFSP2 and CRYAA. This Mus musculus (Mouse) protein is Alpha-crystallin A chain (Cryaa).